We begin with the raw amino-acid sequence, 175 residues long: dATP triphosphohydrolase (175 aa).

Arginine 19 provides a ligand contact to dATP. Histidine 34, histidine 66, aspartate 67, glutamate 70, aspartate 75, and aspartate 119 together coordinate Co(2+).

The protein belongs to the Caudovirales dATP triphosphohydrolase family. As to quaternary structure, homohexamer. Requires Co(2+) as cofactor. Zn(2+) serves as cofactor.

It carries out the reaction dATP + H2O = 2'-deoxyadenosine + triphosphate + H(+). The enzyme catalyses dADP + H2O = 2'-deoxyadenosine + diphosphate. It catalyses the reaction dAMP + H2O = 2'-deoxyadenosine + phosphate. In terms of biological role, catalyzes the hydrolysis of dATP, dADP and dAMP into dA. This step is essential for Z-genome synthesis (containing aminoadenine instead of adenine). Specifically removes dATP and its precursor dADP from the nucleotide pool of the host, preventing the incorporation of A into the phage genome and favoring the integration of the Z-base into the viral genome. This chain is dATP triphosphohydrolase (datZ), found in Cyanophage S-2L (Cyanobacteria phage S-2L).